A 426-amino-acid chain; its full sequence is Dihydroorotase (426 aa).

Zn(2+) contacts are provided by histidine 62 and histidine 64. Substrate contacts are provided by residues 64-66 (HLR) and asparagine 96. Residues aspartate 154, histidine 181, histidine 234, and aspartate 307 each coordinate Zn(2+). Aspartate 307 is an active-site residue. Histidine 311 provides a ligand contact to substrate.

The protein belongs to the metallo-dependent hydrolases superfamily. DHOase family. Class I DHOase subfamily. It depends on Zn(2+) as a cofactor.

The catalysed reaction is (S)-dihydroorotate + H2O = N-carbamoyl-L-aspartate + H(+). Its pathway is pyrimidine metabolism; UMP biosynthesis via de novo pathway; (S)-dihydroorotate from bicarbonate: step 3/3. Functionally, catalyzes the reversible cyclization of carbamoyl aspartate to dihydroorotate. In Syntrophus aciditrophicus (strain SB), this protein is Dihydroorotase.